The following is a 281-amino-acid chain: Deoxyribonuclease-1 (281 aa).

The first 21 residues, 1–21 (MRSEMLTALLTLAVLLQVAGS), serve as a signal peptide directing secretion. N-linked (GlcNAc...) asparagine glycosylation occurs at N39. The active site involves E99. Cysteines 122 and 125 form a disulfide. Residue H155 is part of the active site.

Belongs to the DNase I family. Ca(2+) serves as cofactor. Mg(2+) is required as a cofactor. In terms of tissue distribution, equivalent levels in pancreas and parotid gland, low amounts in kidney, liver, small intestine, stomach and thymus.

Its subcellular location is the secreted. The protein resides in the zymogen granule. The protein localises to the nucleus envelope. It catalyses the reaction Endonucleolytic cleavage to 5'-phosphodinucleotide and 5'-phosphooligonucleotide end-products.. In terms of biological role, serum endocuclease secreted into body fluids by a wide variety of exocrine and endocrine organs. Expressed by non-hematopoietic tissues and preferentially cleaves protein-free DNA. Among other functions, seems to be involved in cell death by apoptosis. Binds specifically to G-actin and blocks actin polymerization. Preferentially attacks double-stranded DNA and produces oligonucleotides with 5'-phospho and 3'-hydroxy termini. Together with DNASE1L3, plays a key role in degrading neutrophil extracellular traps (NETs). NETs are mainly composed of DNA fibers and are released by neutrophils to bind pathogens during inflammation. Degradation of intravascular NETs by DNASE1 and DNASE1L3 is required to prevent formation of clots that obstruct blood vessels and cause organ damage following inflammation. The polypeptide is Deoxyribonuclease-1 (DNASE1) (Oryctolagus cuniculus (Rabbit)).